We begin with the raw amino-acid sequence, 435 residues long: Probable exopolygalacturonase X (435 aa).

The signal sequence occupies residues Met-1 to Ala-22. The disordered stretch occupies residues Cys-31 to His-55. A compositionally biased stretch (basic and acidic residues) spans Ser-45–His-55. N-linked (GlcNAc...) asparagine glycosylation is found at Asn-93, Asn-112, Asn-128, and Asn-198. 2 PbH1 repeats span residues Ser-199–Arg-229 and Ser-230–Pro-251. Residue Asp-244 is the Proton donor of the active site. Cys-246 and Cys-263 form a disulfide bridge. Residues Asn-252 and Asn-264 are each glycosylated (N-linked (GlcNAc...) asparagine). The stretch at Ser-253–Ser-273 is one PbH1 3 repeat. Residue His-267 is part of the active site. N-linked (GlcNAc...) asparagine glycosylation is found at Asn-291, Asn-296, Asn-328, and Asn-353. Residues Val-326–Gln-347 form a PbH1 4 repeat. One copy of the PbH1 5 repeat lies at Pro-361–Ser-409. A disulfide bond links Cys-391 and Cys-397. 2 N-linked (GlcNAc...) asparagine glycosylation sites follow: Asn-406 and Asn-429.

Belongs to the glycosyl hydrolase 28 family.

The protein resides in the secreted. It catalyses the reaction [(1-&gt;4)-alpha-D-galacturonosyl](n) + H2O = alpha-D-galacturonate + [(1-&gt;4)-alpha-D-galacturonosyl](n-1). In terms of biological role, specific in hydrolyzing the terminal glycosidic bond of polygalacturonic acid and oligogalacturonates. In Aspergillus niger (strain ATCC MYA-4892 / CBS 513.88 / FGSC A1513), this protein is Probable exopolygalacturonase X (pgaX).